The sequence spans 706 residues: Lysophospholipase 2 (706 aa).

The N-terminal stretch at 1–19 (MQLRNILQASSLISGLSLA) is a signal peptide. The 553-residue stretch at 36–588 (PCPSDDTSLV…ADYCWNGTLS (553 aa)) folds into the PLA2c domain. Residues N47, N80, N94, N125, N162, N181, N193, N217, N279, N309, N365, N390, N491, N515, N524, N543, N567, N584, N598, N630, N634, N642, N648, N652, and N658 are each glycosylated (N-linked (GlcNAc...) asparagine). A disordered region spans residues 627–672 (TSGNTTSNSTTSTSSNVTSNSNSSSNTTLNSNSSSSSISSSTARSS). The GPI-anchor amidated asparagine moiety is linked to residue N680. A propeptide spans 681 to 706 (AAAISYANTNTLMSLLGAITALFGLI) (removed in mature form).

This sequence belongs to the lysophospholipase family. In terms of processing, the GPI-anchor is attached to the protein in the endoplasmic reticulum and serves to target the protein to the cell surface. There, the glucosamine-inositol phospholipid moiety is cleaved off and the GPI-modified mannoprotein is covalently attached via its lipidless GPI glycan remnant to the 1,6-beta-glucan of the outer cell wall layer.

It localises to the secreted. Its subcellular location is the cell wall. It is found in the membrane. It catalyses the reaction a 1-acyl-sn-glycero-3-phosphocholine + H2O = sn-glycerol 3-phosphocholine + a fatty acid + H(+). The catalysed reaction is 1-hexadecanoyl-sn-glycero-3-phosphoethanolamine + H2O = sn-glycero-3-phosphoethanolamine + hexadecanoate + H(+). The enzyme catalyses 1-hexadecanoyl-sn-glycero-3-phosphocholine + H2O = sn-glycerol 3-phosphocholine + hexadecanoate + H(+). It carries out the reaction 1-hexadecanoyl-sn-glycero-3-phospho-L-serine + H2O = sn-glycero-3-phospho-L-serine + hexadecanoate + H(+). It catalyses the reaction 1,2-dihexadecanoyl-sn-glycero-3-phosphocholine + H2O = 1-hexadecanoyl-sn-glycero-3-phosphocholine + hexadecanoate + H(+). In terms of biological role, sequentially removes both fatty acyl groups from diacylglycerophospholipids and therefore has both phospholipase A and lysophospholipase activities. However, it does not display transacylase activity. Substrate preference is phosphatidylserine &gt; phosphatidylinositol &gt; phosphatidylcholine &gt; phosphatidylethanolamine. The substrate specificity is pH- and ion-dependent. In contrast with activities observed at optimum pH 3.5, the order of substrate preference at pH 5.5 is phosphatidylserine = phosphatidylethanolamine &gt; phosphatidylcholine &gt; phosphatidylinositol. The chain is Lysophospholipase 2 (PLB2) from Saccharomyces cerevisiae (strain ATCC 204508 / S288c) (Baker's yeast).